Reading from the N-terminus, the 434-residue chain is Probable phosphoglucosamine mutase (434 aa).

S91 acts as the Phosphoserine intermediate in catalysis. Mg(2+) contacts are provided by S91, D229, D231, and D233. S91 is modified (phosphoserine).

Belongs to the phosphohexose mutase family. Mg(2+) is required as a cofactor. In terms of processing, activated by phosphorylation.

The catalysed reaction is alpha-D-glucosamine 1-phosphate = D-glucosamine 6-phosphate. Its function is as follows. Catalyzes the conversion of glucosamine-6-phosphate to glucosamine-1-phosphate. The chain is Probable phosphoglucosamine mutase from Methanosarcina acetivorans (strain ATCC 35395 / DSM 2834 / JCM 12185 / C2A).